The primary structure comprises 506 residues: Histidine ammonia-lyase (506 aa).

The 5-imidazolinone (Ala-Gly) cross-link spans 143 to 145 (ASG). Serine 144 bears the 2,3-didehydroalanine (Ser) mark.

It belongs to the PAL/histidase family. In terms of processing, contains an active site 4-methylidene-imidazol-5-one (MIO), which is formed autocatalytically by cyclization and dehydration of residues Ala-Ser-Gly.

The protein resides in the cytoplasm. The enzyme catalyses L-histidine = trans-urocanate + NH4(+). It participates in amino-acid degradation; L-histidine degradation into L-glutamate; N-formimidoyl-L-glutamate from L-histidine: step 1/3. This is Histidine ammonia-lyase from Salmonella dublin (strain CT_02021853).